Reading from the N-terminus, the 373-residue chain is Erythronate-4-phosphate dehydrogenase (373 aa).

Substrate contacts are provided by serine 45 and threonine 67. Residues aspartate 147, 207–209 (ASR), and aspartate 233 each bind NAD(+). Arginine 209 is a catalytic residue. Glutamate 238 is an active-site residue. The Proton donor role is filled by histidine 255. Glycine 258 provides a ligand contact to NAD(+).

Belongs to the D-isomer specific 2-hydroxyacid dehydrogenase family. PdxB subfamily. As to quaternary structure, homodimer.

Its subcellular location is the cytoplasm. The catalysed reaction is 4-phospho-D-erythronate + NAD(+) = (R)-3-hydroxy-2-oxo-4-phosphooxybutanoate + NADH + H(+). Its pathway is cofactor biosynthesis; pyridoxine 5'-phosphate biosynthesis; pyridoxine 5'-phosphate from D-erythrose 4-phosphate: step 2/5. Catalyzes the oxidation of erythronate-4-phosphate to 3-hydroxy-2-oxo-4-phosphonooxybutanoate. The polypeptide is Erythronate-4-phosphate dehydrogenase (Pseudoalteromonas translucida (strain TAC 125)).